We begin with the raw amino-acid sequence, 194 residues long: Putative 3-methyladenine DNA glycosylase (194 aa).

The protein belongs to the DNA glycosylase MPG family.

The polypeptide is Putative 3-methyladenine DNA glycosylase (Synechococcus elongatus (strain ATCC 33912 / PCC 7942 / FACHB-805) (Anacystis nidulans R2)).